Reading from the N-terminus, the 291-residue chain is ATP phosphoribosyltransferase 1 (291 aa).

The protein belongs to the ATP phosphoribosyltransferase family. Long subfamily. Mg(2+) is required as a cofactor.

It is found in the cytoplasm. The catalysed reaction is 1-(5-phospho-beta-D-ribosyl)-ATP + diphosphate = 5-phospho-alpha-D-ribose 1-diphosphate + ATP. The protein operates within amino-acid biosynthesis; L-histidine biosynthesis; L-histidine from 5-phospho-alpha-D-ribose 1-diphosphate: step 1/9. With respect to regulation, feedback inhibited by histidine. Its function is as follows. Catalyzes the condensation of ATP and 5-phosphoribose 1-diphosphate to form N'-(5'-phosphoribosyl)-ATP (PR-ATP). Has a crucial role in the pathway because the rate of histidine biosynthesis seems to be controlled primarily by regulation of HisG enzymatic activity. The protein is ATP phosphoribosyltransferase 1 of Geobacter sulfurreducens (strain ATCC 51573 / DSM 12127 / PCA).